The following is a 336-amino-acid chain: Biotin synthase (336 aa).

Residues 51–270 (NQVQCNQLLN…IALARIMMPK (220 aa)) form the Radical SAM core domain. The [4Fe-4S] cluster site is built by cysteine 66, cysteine 70, and cysteine 73. The [2Fe-2S] cluster site is built by cysteine 110, cysteine 141, cysteine 201, and arginine 274.

It belongs to the radical SAM superfamily. Biotin synthase family. In terms of assembly, homodimer. [4Fe-4S] cluster is required as a cofactor. The cofactor is [2Fe-2S] cluster.

It carries out the reaction (4R,5S)-dethiobiotin + (sulfur carrier)-SH + 2 reduced [2Fe-2S]-[ferredoxin] + 2 S-adenosyl-L-methionine = (sulfur carrier)-H + biotin + 2 5'-deoxyadenosine + 2 L-methionine + 2 oxidized [2Fe-2S]-[ferredoxin]. The protein operates within cofactor biosynthesis; biotin biosynthesis; biotin from 7,8-diaminononanoate: step 2/2. In terms of biological role, catalyzes the conversion of dethiobiotin (DTB) to biotin by the insertion of a sulfur atom into dethiobiotin via a radical-based mechanism. This chain is Biotin synthase, found in Rhodopseudomonas palustris (strain ATCC BAA-98 / CGA009).